The primary structure comprises 937 residues: MVNLRGYNWKSQQLLLFLIIVAAWEAGSGQLHYSVPEEAKHGTFVGRIAQDLGLELTELVPRLFRVASKDRGDLLEVNLQNGILFVNSRIDREELCGRSAECSIHLEVIVDRPLQVFHVEVEVKDINDNPPMFPATQKALFILESRLLDSRFPLEGASDADVGSNALLTYRLSTNEHFSLDVPPNHEQVKPLGLVLRKPLDREEAAEIRLLLTATDGGKPELTGTVQLLITVLDVNDNAPVFDRSLYTVKLPENVPNGTLVIKVNASDLDEGVNGDVMYSFSSDVSSDIKSKFHMDTVSGEITVIGIIDFEESKAYKIPLEARDKGFPQLPGHCTILVEVVDANDNAPQLTVSSLSLPVSEDSQPGRVVTLISVFDRDSGANGQVTCSLTPHIPFKLVSTFKNYYSLVLDSALDRETIANYDVIVTARDGGSPSLWATASVSVEVADVNDNAPLFAQPEYTVFVKENNPPGAHIFTVSAMDADAQENALVSYSLVERRVGERLLSSYVSVHAESGKVFALQPLDHEELELLQFQVSARDAGVPALGSNVTLQVFVLDENDNAPTLLGPLANGVGGTMNEVVSRALVPGQVVAKVRAVDEDSGYNAWLSFELQPVAGGVRSPFRVGLYTGEISTTRALEETDALRQCLLVLVKDHGEPSLTATATVLLSLVDSGQTQKVSSKVSAGASRVDQRLVDVNVYLIIAICAVSSLLVLTLLLYTALRCSATPTDGACAPGKPMLVCSSAVGSWSYSQQRRQRVCSGEGPPKTDLMAFSPSLPQGPSSTDNPRQPNPDWRYSASLRAGMHSSVHLEEAGILRAGPGGPDQQWPTVSSATPEPEAGEVSPPVGAGVNSNSWTFKYGPGNPKQSGPGELPDKFIIPGSPAIISIRQEPANNQIDKSDFITFGKKEETKKKKKKKKGNKTQEKKEKGNSTTDNSDQ.

The signal sequence occupies residues 1-29 (MVNLRGYNWKSQQLLLFLIIVAAWEAGSG). Residues 30 to 697 (QLHYSVPEEA…RVDQRLVDVN (668 aa)) are Extracellular-facing. Cadherin domains lie at 34–133 (SVPE…PPMF), 157–242 (ASDA…APVF), 243–350 (DRSL…APQL), 351–455 (TVSS…APLF), 456–565 (AQPE…APTL), and 587–682 (PGQV…SSKV). Cysteine 96 and cysteine 102 are joined by a disulfide. O-linked (Man) threonine glycans are attached at residues threonine 223 and threonine 225. N-linked (GlcNAc...) asparagine glycosylation is found at asparagine 257 and asparagine 265. Threonine 438 carries O-linked (Man) threonine glycosylation. Serine 478 is a glycosylation site (O-linked (Man) serine). An N-linked (GlcNAc...) asparagine glycan is attached at asparagine 548. A helical membrane pass occupies residues 698-718 (VYLIIAICAVSSLLVLTLLLY). Over 719-937 (TALRCSATPT…GNSTTDNSDQ (219 aa)) the chain is Cytoplasmic. Disordered regions lie at residues 755–794 (RQRV…PDWR) and 816–843 (RAGP…EVSP). PXXP repeat units follow at residues 774–777 (PSLP), 786–789 (PRQP), 819–822 (PGGP), 860–863 (PGNP), and 878–881 (PGSP). The 5 X 4 AA repeats of P-X-X-P stretch occupies residues 774–881 (PSLPQGPSST…PDKFIIPGSP (108 aa)). Polar residues predominate over residues 775-787 (SLPQGPSSTDNPR). The interval 887-937 (RQEPANNQIDKSDFITFGKKEETKKKKKKKKGNKTQEKKEKGNSTTDNSDQ) is disordered. Basic and acidic residues predominate over residues 896–910 (DKSDFITFGKKEETK).

Forms homodimers in trans (molecules expressed by two different cells). Forms promiscuous heterodimers in cis (at the plasma membrane of the same cell) with other protocadherins.

The protein localises to the cell membrane. Its function is as follows. Calcium-dependent cell-adhesion protein involved in cells self-recognition and non-self discrimination. Thereby, it is involved in the establishment and maintenance of specific neuronal connections in the brain. The sequence is that of Protocadherin alpha-7 from Mus musculus (Mouse).